A 200-amino-acid polypeptide reads, in one-letter code: Recombination protein RecR (200 aa).

The segment at 57–72 (CSQCRTFTEQETCAIC) adopts a C4-type zinc-finger fold. One can recognise a Toprim domain in the interval 81 to 176 (GLLCVVEMPA…KVSRIAHGIP (96 aa)).

It belongs to the RecR family.

Its function is as follows. May play a role in DNA repair. It seems to be involved in an RecBC-independent recombinational process of DNA repair. It may act with RecF and RecO. The chain is Recombination protein RecR from Actinobacillus succinogenes (strain ATCC 55618 / DSM 22257 / CCUG 43843 / 130Z).